A 229-amino-acid chain; its full sequence is Small ribosomal subunit protein uS5 (229 aa).

The region spanning 61–124 (LEEQVLDVKL…AHAKLSLIKV (64 aa)) is the S5 DRBM domain.

This sequence belongs to the universal ribosomal protein uS5 family. As to quaternary structure, part of the 30S ribosomal subunit. Contacts protein S4.

In terms of biological role, with S4 and S12 plays an important role in translational accuracy. The protein is Small ribosomal subunit protein uS5 of Methanococcus maripaludis (strain C7 / ATCC BAA-1331).